The chain runs to 164 residues: MIITLARVDDRLIHGQVTTVWSKESNADRIIIVSSEVYKDDIRKTLLKQAAPPGMKVNIVDVPKAIAVYNNPKYQNEKVFYLFTNPREVVDLVKGGIPLEKLNIGGMQFKQGKTQISKAVSLDADDVAAFRELHQLGVKLDLRVVKTDPSSDILAKIDEVFGKE.

Residues Met1–Glu164 form the PTS EIIB type-4 domain. The Pros-phosphohistidine intermediate role is filled by His14. Position 14 is a phosphohistidine; by EIIA (His14).

Its subcellular location is the cytoplasm. The enzyme catalyses keto-L-sorbose(out) + N(pros)-phospho-L-histidyl-[protein] = L-sorbose 1-phosphate(in) + L-histidyl-[protein]. The phosphoenolpyruvate-dependent sugar phosphotransferase system (PTS), a major carbohydrate active transport system, catalyzes the phosphorylation of incoming sugar substrates concomitant with their translocation across the cell membrane. The enzyme II SorABCD PTS system is involved in L-sorbose transport. In Lacticaseibacillus casei (Lactobacillus casei), this protein is PTS system sorbose-specific EIIB component.